The primary structure comprises 284 residues: Cell division protein DivIB (284 aa).

A compositionally biased stretch (basic and acidic residues) spans 1 to 10 (MAWLRKKEQQ). The tract at residues 1–38 (MAWLRKKEQQSDPLTPWQQYQARQQQTPRHDRRQKPKL) is disordered. Residues 1–56 (MAWLRKKEQQSDPLTPWQQYQARQQQTPRHDRRQKPKLDVNLPKIQTLRRRKLVKN) are Cytoplasmic-facing. The helical transmembrane segment at 57 to 77 (LVLILLPLLLLLGVFGYFASP) threads the bilayer. Over 78–284 (LSKVGLVSVQ…YSSSEKSSND (207 aa)) the chain is Extracellular. The POTRA domain maps to 79-150 (SKVGLVSVQG…NRIIIKTSEY (72 aa)).

It belongs to the FtsQ/DivIB family. DivIB subfamily.

The protein resides in the cell membrane. Cell division protein that may be involved in stabilizing or promoting the assembly of the division complex. In Lacticaseibacillus rhamnosus (strain ATCC 53103 / LMG 18243 / GG) (Lactobacillus rhamnosus), this protein is Cell division protein DivIB.